The sequence spans 573 residues: 2-succinyl-5-enolpyruvyl-6-hydroxy-3-cyclohexene-1-carboxylate synthase (573 aa).

This sequence belongs to the TPP enzyme family. MenD subfamily. As to quaternary structure, homodimer. It depends on Mg(2+) as a cofactor. Mn(2+) serves as cofactor. Thiamine diphosphate is required as a cofactor.

The enzyme catalyses isochorismate + 2-oxoglutarate + H(+) = 5-enolpyruvoyl-6-hydroxy-2-succinyl-cyclohex-3-ene-1-carboxylate + CO2. The protein operates within quinol/quinone metabolism; 1,4-dihydroxy-2-naphthoate biosynthesis; 1,4-dihydroxy-2-naphthoate from chorismate: step 2/7. It participates in quinol/quinone metabolism; menaquinone biosynthesis. Functionally, catalyzes the thiamine diphosphate-dependent decarboxylation of 2-oxoglutarate and the subsequent addition of the resulting succinic semialdehyde-thiamine pyrophosphate anion to isochorismate to yield 2-succinyl-5-enolpyruvyl-6-hydroxy-3-cyclohexene-1-carboxylate (SEPHCHC). This is 2-succinyl-5-enolpyruvyl-6-hydroxy-3-cyclohexene-1-carboxylate synthase from Shewanella baltica (strain OS155 / ATCC BAA-1091).